A 327-amino-acid chain; its full sequence is Putative pumilio homolog 19 (327 aa).

Residues 1-324 (MAVSDNTFSM…NIANILDTFR (324 aa)) enclose the PUM-HD domain. 6 Pumilio repeats span residues 79 to 114 (SDSD…FCAA), 115 to 149 (ILRR…ALYE), 150 to 185 (RILY…DQLL), 186 to 222 (ELVV…NIAV), 223 to 260 (NLYG…ELLG), and 261 to 295 (CDGD…DLFW).

Its subcellular location is the cytoplasm. Sequence-specific RNA-binding protein that regulates translation and mRNA stability by binding the 3'-UTR of target mRNAs. This is Putative pumilio homolog 19 (APUM19) from Arabidopsis thaliana (Mouse-ear cress).